Here is a 572-residue protein sequence, read N- to C-terminus: Proline--tRNA ligase (572 aa).

The protein belongs to the class-II aminoacyl-tRNA synthetase family. ProS type 1 subfamily. In terms of assembly, homodimer.

It is found in the cytoplasm. It catalyses the reaction tRNA(Pro) + L-proline + ATP = L-prolyl-tRNA(Pro) + AMP + diphosphate. Catalyzes the attachment of proline to tRNA(Pro) in a two-step reaction: proline is first activated by ATP to form Pro-AMP and then transferred to the acceptor end of tRNA(Pro). As ProRS can inadvertently accommodate and process non-cognate amino acids such as alanine and cysteine, to avoid such errors it has two additional distinct editing activities against alanine. One activity is designated as 'pretransfer' editing and involves the tRNA(Pro)-independent hydrolysis of activated Ala-AMP. The other activity is designated 'posttransfer' editing and involves deacylation of mischarged Ala-tRNA(Pro). The misacylated Cys-tRNA(Pro) is not edited by ProRS. In Pectobacterium atrosepticum (strain SCRI 1043 / ATCC BAA-672) (Erwinia carotovora subsp. atroseptica), this protein is Proline--tRNA ligase.